The chain runs to 514 residues: MARVTLVLRYAARSDRGLVRANNEDSVYAGARLLALADGMGGHAAGEVASQLVIAALAHLDDDEPGGDLLAKLDAAVRAGNSAIAAQVEMEPDLEGMGTTLTAILFAGNRLGLVHIGDSRGYLLRDGELTQITKDDTFVQTLVDEGRITPEEAHSHPQRSLIMRALTGHEVEPTLTMREARAGDRYLLCSDGLSDPVSDETILEALQIPEVAESAHRLIELALRGGGPDNVTVVVADVVDYDYGQTQPILAGAVSGDDDQLTLPNTAAGRASAISQRKEIVKRVPPQADTFSRPRWSGRRLAFVVALVTVLMTAGLLIGRAIIRSNYYVADYAGSVSIMRGIQGSLLGMSLHQPYLMGCLSPRNELSQISYGQSGGPLDCHLMKLEDLRPPERAQVRAGLPAGTLDDAIGQLRELAANSLLPPCPAPRATSPPGRPAPPTTSETTEPNVTSSPASPSPTTSASAPTGTTPAIPTSASPAAPASPPTPWPVTSSPTMAALPPPPPQPGIDCRAAA.

Topologically, residues 1-302 (MARVTLVLRY…RPRWSGRRLA (302 aa)) are cytoplasmic. Residues 9–238 (RYAARSDRGL…DNVTVVVADV (230 aa)) form the PPM-type phosphatase domain. Residues aspartate 38, glycine 39, aspartate 118, serine 160, aspartate 191, and aspartate 229 each coordinate Mn(2+). Residues 303-323 (FVVALVTVLMTAGLLIGRAII) form a helical membrane-spanning segment. Topologically, residues 324 to 514 (RSNYYVADYA…QPGIDCRAAA (191 aa)) are extracellular. Residues 420–514 (LLPPCPAPRA…QPGIDCRAAA (95 aa)) form a disordered region. Positions 440 to 480 (TTSETTEPNVTSSPASPSPTTSASAPTGTTPAIPTSASPAA) are enriched in low complexity.

The cofactor is Mn(2+).

It is found in the cell membrane. It catalyses the reaction O-phospho-L-seryl-[protein] + H2O = L-seryl-[protein] + phosphate. It carries out the reaction O-phospho-L-threonyl-[protein] + H2O = L-threonyl-[protein] + phosphate. Its function is as follows. Plays an important role in regulating cell division and growth by reversible phosphorylation signaling. May play important roles in regulating cellular metabolism and signaling pathways, which could mediate the growth and development of the cell. Plays a role in establishing and maintaining infection. This Mycobacterium tuberculosis (strain CDC 1551 / Oshkosh) protein is Serine/threonine protein phosphatase PstP (pstP).